A 365-amino-acid chain; its full sequence is Histidinol-phosphate aminotransferase (365 aa).

N6-(pyridoxal phosphate)lysine is present on lysine 222.

Belongs to the class-II pyridoxal-phosphate-dependent aminotransferase family. Histidinol-phosphate aminotransferase subfamily. As to quaternary structure, homodimer. Requires pyridoxal 5'-phosphate as cofactor.

It carries out the reaction L-histidinol phosphate + 2-oxoglutarate = 3-(imidazol-4-yl)-2-oxopropyl phosphate + L-glutamate. It participates in amino-acid biosynthesis; L-histidine biosynthesis; L-histidine from 5-phospho-alpha-D-ribose 1-diphosphate: step 7/9. This is Histidinol-phosphate aminotransferase from Geobacillus sp. (strain WCH70).